The following is a 941-amino-acid chain: Heat shock protein 70 homolog (941 aa).

The segment at 851-887 (ENQPDIPEDSEDSESEDDTTTSKDSESSEITENLALP) is disordered. Acidic residues predominate over residues 856 to 869 (IPEDSEDSESEDDT).

This sequence belongs to the heat shock protein 70 family.

Its function is as follows. Probable chaperone. This Acanthamoeba polyphaga (Amoeba) protein is Heat shock protein 70 homolog.